A 303-amino-acid chain; its full sequence is UDP-3-O-acyl-N-acetylglucosamine deacetylase (303 aa).

Zn(2+) is bound by residues histidine 78, histidine 237, and aspartate 241. The Proton donor role is filled by histidine 264.

It belongs to the LpxC family. Zn(2+) is required as a cofactor.

It carries out the reaction a UDP-3-O-[(3R)-3-hydroxyacyl]-N-acetyl-alpha-D-glucosamine + H2O = a UDP-3-O-[(3R)-3-hydroxyacyl]-alpha-D-glucosamine + acetate. It functions in the pathway glycolipid biosynthesis; lipid IV(A) biosynthesis; lipid IV(A) from (3R)-3-hydroxytetradecanoyl-[acyl-carrier-protein] and UDP-N-acetyl-alpha-D-glucosamine: step 2/6. Functionally, catalyzes the hydrolysis of UDP-3-O-myristoyl-N-acetylglucosamine to form UDP-3-O-myristoylglucosamine and acetate, the committed step in lipid A biosynthesis. The protein is UDP-3-O-acyl-N-acetylglucosamine deacetylase of Teredinibacter turnerae (strain ATCC 39867 / T7901).